The chain runs to 156 residues: Small ribosomal subunit protein uS7 (156 aa).

Belongs to the universal ribosomal protein uS7 family. As to quaternary structure, part of the 30S ribosomal subunit. Contacts proteins S9 and S11.

In terms of biological role, one of the primary rRNA binding proteins, it binds directly to 16S rRNA where it nucleates assembly of the head domain of the 30S subunit. Is located at the subunit interface close to the decoding center, probably blocks exit of the E-site tRNA. In Pseudomonas syringae pv. tomato (strain ATCC BAA-871 / DC3000), this protein is Small ribosomal subunit protein uS7.